A 650-amino-acid chain; its full sequence is SUMO-activating enzyme subunit 2 (650 aa).

ATP contacts are provided by residues 25–30, Asp49, 57–60, Lys73, 96–97, and 118–123; these read GAGGIG, NLNR, SI, and DNRAAR. Zn(2+)-binding residues include Cys159 and Cys162. Cys174 (glycyl thioester intermediate) is an active-site residue. A Glycyl lysine isopeptide (Lys-Gly) (interchain with G-Cter in SUMO) cross-link involves residue Lys191. Residue Lys237 forms a Glycyl lysine isopeptide (Lys-Gly) (interchain with G-Cter in SUMO1) linkage. Residues Lys258, Lys282, and Lys286 each participate in a glycyl lysine isopeptide (Lys-Gly) (interchain with G-Cter in SUMO) cross-link. Positions 446 and 449 each coordinate Zn(2+). The disordered stretch occupies residues 554–650; it reads DAPDKAPAPS…DDDEDIIALD (97 aa). Over residues 572 to 586 the composition is skewed to polar residues; sequence ANGNKDSAQPSTSSK. The span at 590-603 shows a compositional bias: acidic residues; it reads EDDDVLLVDSDEEP. The residue at position 599 (Ser599) is a Phosphoserine. Residues Lys618 and Lys630 each participate in a glycyl lysine isopeptide (Lys-Gly) (interchain with G-Cter in SUMO) cross-link. Over residues 638-650 the composition is skewed to acidic residues; that stretch reads PADDDDEDIIALD.

It belongs to the ubiquitin-activating E1 family. As to quaternary structure, heterodimer of sae1 and uba2/sae2. The heterodimer corresponds to the two domains that are encoded on a single polypeptide chain in ubiquitin-activating enzyme E1. Interacts with ube2i. Post-translationally, sumoylated with SUMO1 and SUMO2/3 and by UBC9. Sumoylation at Lys-237 inhibits enzymatic activity. Sumoylation at the C-terminal lysine cluster plays an essential role in nuclear trafficking. Expressed in eye, brain and pectoral fins.

It localises to the cytoplasm. Its subcellular location is the nucleus. It functions in the pathway protein modification; protein sumoylation. The heterodimer acts as an E1 ligase for sumo1, sumo2, and sumo3. It mediates ATP-dependent activation of sumo proteins followed by formation of a thioester bond between a sumo protein and a conserved active site cysteine residue on uba2/sae2. The sequence is that of SUMO-activating enzyme subunit 2 (uba2) from Danio rerio (Zebrafish).